Here is a 281-residue protein sequence, read N- to C-terminus: BURP domain-containing protein BNM2C (281 aa).

The signal sequence occupies residues 1 to 25 (MASLRFSVTFPALFSLLLSLWVVDA). The region spanning 59–281 (FFKISDLKLG…PLDNIVWVSK (223 aa)) is the BURP domain.

In terms of tissue distribution, expressed in the radicle of germinating seeds 2 days post-imbibition (DPI) and in roots of 30-DPI young plants. Expressed in the embryo and seed coat tissues of developing seeds. The protein accumulates only in seeds and only long after transcript accumulation becomes evident.

The protein resides in the protein storage vacuole. This chain is BURP domain-containing protein BNM2C, found in Brassica napus (Rape).